We begin with the raw amino-acid sequence, 593 residues long: Glucose-6-phosphate 1-dehydrogenase, chloroplastic (593 aa).

NADP(+)-binding positions include 116–123 (GASGDLAK) and arginine 150. Cysteines 168 and 176 form a disulfide. An NADP(+)-binding site is contributed by lysine 253. Residues lysine 253, 283–287 (HYLGK), glutamate 321, and aspartate 340 contribute to the D-glucose 6-phosphate site. The Proton acceptor role is filled by histidine 345. Lysine 438 is a binding site for NADP(+). D-glucose 6-phosphate contacts are provided by lysine 441 and arginine 446. Positions 451 and 480 each coordinate NADP(+). Position 482 (glutamine 482) interacts with D-glucose 6-phosphate. Residues 488–490 (YLK) and arginine 573 each bind NADP(+).

This sequence belongs to the glucose-6-phosphate dehydrogenase family. In terms of assembly, homodimer.

The protein localises to the plastid. The protein resides in the chloroplast. It carries out the reaction D-glucose 6-phosphate + NADP(+) = 6-phospho-D-glucono-1,5-lactone + NADPH + H(+). The protein operates within carbohydrate degradation; pentose phosphate pathway; D-ribulose 5-phosphate from D-glucose 6-phosphate (oxidative stage): step 1/3. Regulated by metabolites. Post-translationally inactivated by cysteine-mediated redox modification via the ferredoxin-thioredoxin system in the light and this avoids futile cycles with photosynthetic CO2 fixation. Catalyzes the rate-limiting step of the oxidative pentose-phosphate pathway, which represents a route for the dissimilation of carbohydrates besides glycolysis. The main function of this enzyme is to provide reducing power (NADPH) and pentose phosphates for fatty acid and nucleic acid synthesis which are involved in membrane synthesis and cell division. This chain is Glucose-6-phosphate 1-dehydrogenase, chloroplastic, found in Nicotiana tabacum (Common tobacco).